The chain runs to 241 residues: Probable transcriptional regulatory protein H16_A0916 (241 aa).

Belongs to the TACO1 family.

It is found in the cytoplasm. This is Probable transcriptional regulatory protein H16_A0916 from Cupriavidus necator (strain ATCC 17699 / DSM 428 / KCTC 22496 / NCIMB 10442 / H16 / Stanier 337) (Ralstonia eutropha).